The following is a 240-amino-acid chain: Small ribosomal subunit protein uS3 (240 aa).

The 71-residue stretch at 39–109 folds into the KH type-2 domain; the sequence is IRQHIDANLN…QIRINVVEVN (71 aa). The interval 216 to 240 is disordered; the sequence is TSAANAAPLPRRKSRRQQFEDRSEQ.

The protein belongs to the universal ribosomal protein uS3 family. Part of the 30S ribosomal subunit. Forms a tight complex with proteins S10 and S14.

In terms of biological role, binds the lower part of the 30S subunit head. Binds mRNA in the 70S ribosome, positioning it for translation. The chain is Small ribosomal subunit protein uS3 from Picosynechococcus sp. (strain ATCC 27264 / PCC 7002 / PR-6) (Agmenellum quadruplicatum).